An 82-amino-acid chain; its full sequence is RNA-binding protein YbxF (82 aa).

This sequence belongs to the eukaryotic ribosomal protein eL8 family.

This Geobacillus stearothermophilus (Bacillus stearothermophilus) protein is RNA-binding protein YbxF.